Reading from the N-terminus, the 524-residue chain is Bifunctional purine biosynthesis protein PurH (524 aa).

In terms of domain architecture, MGS-like spans 1–145 (MIKQALLSVS…KNHRDVTVIV (145 aa)).

It belongs to the PurH family.

The enzyme catalyses (6R)-10-formyltetrahydrofolate + 5-amino-1-(5-phospho-beta-D-ribosyl)imidazole-4-carboxamide = 5-formamido-1-(5-phospho-D-ribosyl)imidazole-4-carboxamide + (6S)-5,6,7,8-tetrahydrofolate. The catalysed reaction is IMP + H2O = 5-formamido-1-(5-phospho-D-ribosyl)imidazole-4-carboxamide. It participates in purine metabolism; IMP biosynthesis via de novo pathway; 5-formamido-1-(5-phospho-D-ribosyl)imidazole-4-carboxamide from 5-amino-1-(5-phospho-D-ribosyl)imidazole-4-carboxamide (10-formyl THF route): step 1/1. The protein operates within purine metabolism; IMP biosynthesis via de novo pathway; IMP from 5-formamido-1-(5-phospho-D-ribosyl)imidazole-4-carboxamide: step 1/1. This chain is Bifunctional purine biosynthesis protein PurH, found in Cupriavidus metallidurans (strain ATCC 43123 / DSM 2839 / NBRC 102507 / CH34) (Ralstonia metallidurans).